Consider the following 210-residue polypeptide: Thymidylate kinase (210 aa).

ATP is bound at residue Gly-11–Thr-18.

Belongs to the thymidylate kinase family.

The enzyme catalyses dTMP + ATP = dTDP + ADP. Functionally, phosphorylation of dTMP to form dTDP in both de novo and salvage pathways of dTTP synthesis. This is Thymidylate kinase (tmk) from Mycoplasma genitalium (strain ATCC 33530 / DSM 19775 / NCTC 10195 / G37) (Mycoplasmoides genitalium).